Consider the following 81-residue polypeptide: Photosystem I iron-sulfur center (81 aa).

2 consecutive 4Fe-4S ferredoxin-type domains span residues 2-31 and 39-68; these read SHSV…MIPW and IASA…VRVY. [4Fe-4S] cluster-binding residues include Cys-11, Cys-14, Cys-17, Cys-21, Cys-48, Cys-51, Cys-54, and Cys-58.

As to quaternary structure, the eukaryotic PSI reaction center is composed of at least 11 subunits. [4Fe-4S] cluster serves as cofactor.

It localises to the plastid. Its subcellular location is the chloroplast thylakoid membrane. It catalyses the reaction reduced [plastocyanin] + hnu + oxidized [2Fe-2S]-[ferredoxin] = oxidized [plastocyanin] + reduced [2Fe-2S]-[ferredoxin]. In terms of biological role, apoprotein for the two 4Fe-4S centers FA and FB of photosystem I (PSI); essential for photochemical activity. FB is the terminal electron acceptor of PSI, donating electrons to ferredoxin. The C-terminus interacts with PsaA/B/D and helps assemble the protein into the PSI complex. Required for binding of PsaD and PsaE to PSI. PSI is a plastocyanin-ferredoxin oxidoreductase, converting photonic excitation into a charge separation, which transfers an electron from the donor P700 chlorophyll pair to the spectroscopically characterized acceptors A0, A1, FX, FA and FB in turn. This is Photosystem I iron-sulfur center from Helianthus annuus (Common sunflower).